The following is a 222-amino-acid chain: Putative O-methyltransferase MAP_2558 (222 aa).

Residues Val-49, Glu-71, 73–74 (GT), Ser-79, Asp-97, and Ile-98 each bind S-adenosyl-L-methionine. Asp-145 is a binding site for substrate. Position 147 (Asp-147) interacts with S-adenosyl-L-methionine.

It belongs to the class I-like SAM-binding methyltransferase superfamily. Cation-dependent O-methyltransferase family.

This is Putative O-methyltransferase MAP_2558 from Mycolicibacterium paratuberculosis (strain ATCC BAA-968 / K-10) (Mycobacterium paratuberculosis).